A 120-amino-acid polypeptide reads, in one-letter code: UPF0102 protein NT01CX_2205 (120 aa).

It belongs to the UPF0102 family.

The protein is UPF0102 protein NT01CX_2205 of Clostridium novyi (strain NT).